The sequence spans 531 residues: SWI/SNF-related matrix-associated actin-dependent regulator of chromatin subfamily D member 2 (531 aa).

The disordered stretch occupies residues 20–85 (AVAAALGAPP…MSPGSRMPMA (66 aa)). A compositionally biased stretch (low complexity) spans 34–45 (PGMLPNPALRGP). 2 positions are modified to asymmetric dimethylarginine: Arg81 and Arg104. Residues 202–226 (FSPSKADGDNSGTAGTPGGTPAADK) form a disordered region. Phosphoserine is present on Ser203. Thr217 bears the Phosphothreonine mark. Lys226 is covalently cross-linked (Glycyl lysine isopeptide (Lys-Gly) (interchain with G-Cter in SUMO2)). In terms of domain architecture, SWIB/MDM2 spans 306 to 383 (HQPPQYKLDP…PMKLAGLLQH (78 aa)).

The protein belongs to the SMARCD family. In terms of assembly, component of the multiprotein chromatin-remodeling complexes SWI/SNF: SWI/SNF-A (BAF), SWI/SNF-B (PBAF) and related complexes. The canonical complex contains a catalytic subunit (either SMARCA4/BRG1/BAF190A or SMARCA2/BRM/BAF190B), and at least SMARCE1, ACTL6A/BAF53, SMARCC1/BAF155, SMARCC2/BAF170, and SMARCB1/SNF5/BAF47. Other subunits specific to each of the complexes may also be present permitting several possible combinations developmentally and tissue specific. Component of the BAF complex, which includes at least actin (ACTB), ARID1A/BAF250A, ARID1B/BAF250B, SMARCA2/BRM, SMARCA4/BRG1, ACTL6A/BAF53, ACTL6B/BAF53B, SMARCE1/BAF57, SMARCC1/BAF155, SMARCC2/BAF170, SMARCB1/SNF5/INI1, and one or more SMARCD1/BAF60A, SMARCD2/BAF60B, or SMARCD3/BAF60C. In muscle cells, the BAF complex also contains DPF3. Component of the SWI/SNF-B (PBAF) chromatin remodeling complex, at least composed of SMARCA4/BRG1, SMARCB1/BAF47/SNF5, ACTL6A/BAF53A or ACTL6B/BAF53B, SMARCE1/BAF57, SMARCD1/BAF60A, SMARCD2/BAF60B, perhaps SMARCD3/BAF60C, SMARCC1/BAF155, SMARCC2/BAF170, PBRM1/BAF180, ARID2/BAF200 and actin (ACTB). Interacts with UNKL. Interacts with CEBPE. In terms of processing, ubiquitinated through a signaling process involving RAC1 and the RING finger protein UNKL.

The protein resides in the nucleus. Involved in transcriptional activation and repression of select genes by chromatin remodeling (alteration of DNA-nucleosome topology). Component of SWI/SNF chromatin remodeling complexes that carry out key enzymatic activities, changing chromatin structure by altering DNA-histone contacts within a nucleosome in an ATP-dependent manner. Critical regulator of myeloid differentiation, controlling granulocytopoiesis and the expression of genes involved in neutrophil granule formation. This is SWI/SNF-related matrix-associated actin-dependent regulator of chromatin subfamily D member 2 (Smarcd2) from Rattus norvegicus (Rat).